The primary structure comprises 273 residues: Putative pyruvate, phosphate dikinase regulatory protein (273 aa).

An ADP-binding site is contributed by 149–156 (GPSRTSKT).

The protein belongs to the pyruvate, phosphate/water dikinase regulatory protein family. PDRP subfamily.

The catalysed reaction is N(tele)-phospho-L-histidyl/L-threonyl-[pyruvate, phosphate dikinase] + ADP = N(tele)-phospho-L-histidyl/O-phospho-L-threonyl-[pyruvate, phosphate dikinase] + AMP + H(+). The enzyme catalyses N(tele)-phospho-L-histidyl/O-phospho-L-threonyl-[pyruvate, phosphate dikinase] + phosphate + H(+) = N(tele)-phospho-L-histidyl/L-threonyl-[pyruvate, phosphate dikinase] + diphosphate. Functionally, bifunctional serine/threonine kinase and phosphorylase involved in the regulation of the pyruvate, phosphate dikinase (PPDK) by catalyzing its phosphorylation/dephosphorylation. In Rickettsia prowazekii (strain Madrid E), this protein is Putative pyruvate, phosphate dikinase regulatory protein.